A 315-amino-acid polypeptide reads, in one-letter code: Aspartate carbamoyltransferase catalytic subunit (315 aa).

Carbamoyl phosphate-binding residues include Arg-64 and Thr-65. Lys-92 contributes to the L-aspartate binding site. Arg-114, His-142, and Gln-145 together coordinate carbamoyl phosphate. Residues Arg-175 and Arg-229 each coordinate L-aspartate. Gly-270 and Pro-271 together coordinate carbamoyl phosphate.

The protein belongs to the aspartate/ornithine carbamoyltransferase superfamily. ATCase family. Heterododecamer (2C3:3R2) of six catalytic PyrB chains organized as two trimers (C3), and six regulatory PyrI chains organized as three dimers (R2).

It catalyses the reaction carbamoyl phosphate + L-aspartate = N-carbamoyl-L-aspartate + phosphate + H(+). The protein operates within pyrimidine metabolism; UMP biosynthesis via de novo pathway; (S)-dihydroorotate from bicarbonate: step 2/3. Catalyzes the condensation of carbamoyl phosphate and aspartate to form carbamoyl aspartate and inorganic phosphate, the committed step in the de novo pyrimidine nucleotide biosynthesis pathway. In Methylorubrum populi (strain ATCC BAA-705 / NCIMB 13946 / BJ001) (Methylobacterium populi), this protein is Aspartate carbamoyltransferase catalytic subunit.